An 821-amino-acid polypeptide reads, in one-letter code: MAKFALNQNLPDLGGPRLCPVPAAGGARSPSSPYSVETPYGFHLDLDFLKYIEELERGPAARRAPGPPTSRRPRAPRPGLAGARSPGAWTSSESLASDDGGAPGILSQGAPSGLLMQPLSPRAPVRNPRVEHTLRETSRRLELAQTHERAPSPGRGVPRSPRGSGRSSPAPNLAPASPGPAQLQLVREQMAAALRRLRELEDQARTLPELQEQVRALRAEKARLLAGRAQPEPDGEAETRPDKLAQLRRLTERLATSERGGRARASPRADSPDGLAAGRSEGALQVLDGEVGSLDGTPQTREVAAEAVPETREAGAQAVPETREAGVEAAPETVEADAWVTEALLGLPAAAERELELLRASLEHQRGVSELLRGRLRELEEAREAAEEAAAGARAQLREATTQTPWSCAEKAAQTESPAEAPSLTQESSPGSMDGDRAVAPAGILKSIMKKRDGTPGAQPSSGPKSLQFVGVLNGEYESSSSEDASDSDGDSENGGAEPPGSSSGSGDDSGGGSDSGTPGPPSGGDIRDPEPEAEAEPQQVAQGRCELSPRLREACVALQRQLSRPRGVASDGGAVRLVAQEWFRVSSQRRSQAEPVARMLEGVRRLGPELLAHVVNLADGNGNTALHYSVSHGNLAIASLLLDTGACEVNRQNRAGYSALMLAALTSVRQEEEDMAVVQRLFCMGDVNAKASQTGQTALMLAISHGRQDMVATLLACGADVNAQDADGATALMCASEYGRLDTVRLLLTQPGCDPAILDNEGTSALAIALEAEQDEVAALLHAHLSSGQPDTQSESPPGSQTATPGEGECGDNGENPQVQ.

Positions 1–10 (MAKFALNQNL) are enriched in polar residues. Disordered stretches follow at residues 1–36 (MAKF…PYSV), 58–184 (GPAA…AQLQ), 224–333 (LLAG…APET), and 385–547 (AAEE…GRCE). Over residues 77–88 (RPGLAGARSPGA) the composition is skewed to low complexity. The span at 128–150 (PRVEHTLRETSRRLELAQTHERA) shows a compositional bias: basic and acidic residues. Residues 151–181 (PSPGRGVPRSPRGSGRSSPAPNLAPASPGPA) are compositionally biased toward low complexity. A phosphoserine mark is found at serine 152, serine 160, serine 164, serine 167, serine 168, and serine 177. Residues 181 to 230 (AQLQLVREQMAAALRRLRELEDQARTLPELQEQVRALRAEKARLLAGRAQ) are a coiled coil. A compositionally biased stretch (basic and acidic residues) spans 237 to 261 (AETRPDKLAQLRRLTERLATSERGG). Phosphoserine is present on residues serine 271, serine 280, and serine 293. Residues 367–404 (GVSELLRGRLRELEEAREAAEEAAAGARAQLREATTQT) adopt a coiled-coil conformation. Low complexity-rich tracts occupy residues 388-400 (EAAA…LREA) and 494-507 (NGGA…SGSG). ANK repeat units follow at residues 622–652 (NGNT…EVNR), 656–690 (AGYS…DVNA), 695–724 (TGQT…DVNA), 728–758 (DGAT…DPAI), and 762–785 (EGTS…LHAH). A disordered region spans residues 784–821 (AHLSSGQPDTQSESPPGSQTATPGEGECGDNGENPQVQ). A compositionally biased stretch (polar residues) spans 787–805 (SSGQPDTQSESPPGSQTAT).

Strongly expressed in breast, liver, lung, skeletal muscle and kidney.

May be involved in the control of cytoskeleton formation by regulating actin polymerization. The polypeptide is KN motif and ankyrin repeat domain-containing protein 3 (Homo sapiens (Human)).